The following is a 951-amino-acid chain: Spliceosome associated factor 3, U4/U6 recycling protein (951 aa).

The tract at residues 1-58 (MAATGNEEQTLLPDIEEEAEGMEREMESEDDEEEGMGVEHSEEEDEEDTSEDERENEA) is disordered. Residues 14–56 (DIEEEAEGMEREMESEDDEEEGMGVEHSEEEDEEDTSEDEREN) are compositionally biased toward acidic residues. 8 HAT repeats span residues 88 to 120 (GKLHRLRKARQKMSELFPLTEEIWLDWLKDEIR), 126 to 157 (SDREKVYELFERAIKDYVCPEIWLEYVQYSIG), 163 to 199 (GGIERVRSIFERALTAVGLHMTKGASIWEAYREFEIV), 222 to 255 (AQLERIHTLFRRQLAVPLMDMEGTYAEYSDWADD), 304 to 336 (GDPARVQIIFERALAENCLVPDLWIKYTTYLDR), 339 to 371 (KIKDLVLSAHERAVRNCPWTMGLWKSYLLALER), 374 to 410 (ADHQTVKDVFEKALNAGFIQATDYVEIWQSYLDYLRR), and 467 to 500 (KNMQKARELWDSIMTKGNAKYANMWLEYYNLERS). The tract at residues 517 to 941 (CTSDYPEHVC…LDTQTKSLSN (425 aa)) is necessary and sufficient for U6 snRNA binding. A coiled-coil region spans residues 533–593 (ERVEGSLEDW…VKADKKAQKK (61 aa)). The segment covering 567–581 (EALHARQEEEKAEQR) has biased composition (basic and acidic residues). The disordered stretch occupies residues 567–686 (EALHARQEEE…HDMPKEQRKD (120 aa)). Positions 582–596 (RKVKADKKAQKKGQK) are enriched in basic residues. The segment covering 608–619 (DDDEEEWGEEAE) has biased composition (acidic residues). Basic and acidic residues predominate over residues 674-686 (RQPHDMPKEQRKD). 2 RRM domains span residues 688–766 (NCVF…PCVD) and 785–862 (HKIF…ISNP). Residues 905–938 (RQSTPDAKAENGTISAPHATVTDGETSLDTQTKS) form a disordered region. Over residues 927–938 (DGETSLDTQTKS) the composition is skewed to polar residues.

The protein localises to the nucleus. It localises to the nucleoplasm. Its subcellular location is the cajal body. The protein resides in the nucleus speckle. It is found in the cytoplasm. In terms of biological role, U6 snRNP-binding protein that functions as a recycling factor of the splicing machinery. Promotes the initial reassembly of U4 and U6 snRNPs following their ejection from the spliceosome during its maturation. May also function as a substrate targeting factor for deubiquitinases and mediate the deubiquitination of components of the spliceosome and histones. This chain is Spliceosome associated factor 3, U4/U6 recycling protein, found in Danio rerio (Zebrafish).